The chain runs to 679 residues: Glycine--tRNA ligase beta subunit (679 aa).

This sequence belongs to the class-II aminoacyl-tRNA synthetase family. In terms of assembly, tetramer of two alpha and two beta subunits.

Its subcellular location is the cytoplasm. It carries out the reaction tRNA(Gly) + glycine + ATP = glycyl-tRNA(Gly) + AMP + diphosphate. This chain is Glycine--tRNA ligase beta subunit, found in Streptococcus mutans serotype c (strain ATCC 700610 / UA159).